Here is a 573-residue protein sequence, read N- to C-terminus: MLSLKLFLVTLFLSLQTLFIASQTLLPSNSSSTICKTTPDPKFCKSVFPQTSQGDVREYGRFSLRKSLTQSRKFTRTIDRYLKRNNALLSQSAVGALQDCRYLASLTTDYLITSFETVNITTSSKTLSFSKADEIQTLLSAALTNEQTCLDGINTAASSSWTIRNGVALPLINDTKLFSVSLALFTKGWVPKKKKQVASYSWAHPKNTHSHTKPFRHFRNGALPLKMTEHTRAVYESLSRRKLADDDNDVNTVLVSDIVTVNQNGTGNFTTITEAVNSAPNKTDGTAGYFVIYVTSGVYEENVVIAKNKRYLMMIGDGINRTVVTGNRNVVDGWTTFNSATFAVTSPNFVAVNMTFRNTAGPEKHQAVAMRSSADLSIFYSCSFEAYQDTLYTHSLRQFYRECDIYGTVDFIFGNAAVVFQDCNLYPRQPMQNQFNAITAQGRTDPNQNTGISIHNCTIKPADDLVSSNYTVKTYLGRPWKEYSRTVFMQSYIDEVVEPVGWREWNGDFALSTLYYAEYNNTGSGSSTTDRVVWPGYHVINSTDANNFTVENFLLGDGWMVQSGVPYISGLLS.

The N-terminal stretch at 1 to 22 is a signal peptide; sequence MLSLKLFLVTLFLSLQTLFIAS. The segment at 25–184 is pectinesterase inhibitor 41; the sequence is LLPSNSSSTI…TKLFSVSLAL (160 aa). 7 N-linked (GlcNAc...) asparagine glycosylation sites follow: Asn29, Asn119, Asn173, Asn264, Asn268, Asn281, and Asn320. The tract at residues 259–557 is pectinesterase 41; the sequence is VTVNQNGTGN…FTVENFLLGD (299 aa). Position 336 (Thr336) interacts with substrate. Residue Asn353 is glycosylated (N-linked (GlcNAc...) asparagine). Gln366 contacts substrate. The active-site Proton donor; for pectinesterase activity is the Asp389. A disulfide bond links Cys403 and Cys423. Asp410 (nucleophile; for pectinesterase activity) is an active-site residue. Asn456 and Asn469 each carry an N-linked (GlcNAc...) asparagine glycan. Residues Arg478 and Trp480 each coordinate substrate. 3 N-linked (GlcNAc...) asparagine glycosylation sites follow: Asn520, Asn541, and Asn547.

This sequence in the N-terminal section; belongs to the PMEI family. The protein in the C-terminal section; belongs to the pectinesterase family. In terms of tissue distribution, expressed in flowers, siliques, floral stems and rosettes leaves.

It is found in the secreted. The protein localises to the cell wall. The catalysed reaction is [(1-&gt;4)-alpha-D-galacturonosyl methyl ester](n) + n H2O = [(1-&gt;4)-alpha-D-galacturonosyl](n) + n methanol + n H(+). It participates in glycan metabolism; pectin degradation; 2-dehydro-3-deoxy-D-gluconate from pectin: step 1/5. Acts in the modification of cell walls via demethylesterification of cell wall pectin. This Arabidopsis thaliana (Mouse-ear cress) protein is Probable pectinesterase/pectinesterase inhibitor 41 (PME41).